Reading from the N-terminus, the 437-residue chain is Eukaryotic peptide chain release factor subunit 1 (437 aa).

The residue at position 2 (Ala-2) is an N-acetylalanine. An NIKS motif; plays an important role in translational termination motif is present at residues 61–64; the sequence is NIKS. 4-hydroxylysine is present on Lys-63. A Glycyl lysine isopeptide (Lys-Gly) (interchain with G-Cter in SUMO2) cross-link involves residue Lys-87. Gln-185 is subject to N5-methylglutamine. Lys-279 is covalently cross-linked (Glycyl lysine isopeptide (Lys-Gly) (interchain with G-Cter in ubiquitin)). Residue Thr-347 is modified to Phosphothreonine. Lys-404 is covalently cross-linked (Glycyl lysine isopeptide (Lys-Gly) (interchain with G-Cter in SUMO2)).

This sequence belongs to the eukaryotic release factor 1 family. Component of the eRF1-eRF3-GTP ternary complex, composed of ETF1/ERF1 and eRF3 (GSPT1/ERF3A or GSPT2/ERF3B) and GTP. Component of the transient SURF (SMG1-UPF1-eRF1-eRF3) complex. Interacts with JMJD4. The ETF1-GSPT1 complex interacts with JMJD4. Post-translationally, hydroxylation at Lys-63 by JMJD4 promotes its translational termination efficiency. In terms of processing, methylated at Gln-185 by N6AMT1. Ubiquitinated at Lys-279 via 'Lys-6'-linked polyubiquitin chains by RNF14 and RNF25 in response to ribosome collisions (ribosome stalling), leading to its degradation by the proteasome and rescue of stalled ribosomes.

Its subcellular location is the cytoplasm. Functionally, component of the eRF1-eRF3-GTP ternary complex, a ternary complex that mediates translation termination in response to the termination codons. The eRF1-eRF3-GTP complex binds to a stop codon in the ribosomal A-site. ETF1/ERF1 is responsible for stop codon recognition and inducing hydrolysis of peptidyl-tRNA. Following GTP hydrolysis, eRF3 (GSPT1/ERF3A or GSPT2/ERF3B) dissociates, permitting ETF1/eRF1 to accommodate fully in the A-site, followed by hydrolysis of peptidyl-tRNA. Component of the transient SURF complex which recruits UPF1 to stalled ribosomes in the context of nonsense-mediated decay (NMD) of mRNAs containing premature stop codons. Required for SHFL-mediated translation termination which inhibits programmed ribosomal frameshifting (-1PRF) of mRNA from viruses and cellular genes. In Bos taurus (Bovine), this protein is Eukaryotic peptide chain release factor subunit 1 (ETF1).